Reading from the N-terminus, the 63-residue chain is Metallothionein (63 aa).

Positions 1-30 (MDPQDCTCAAGDSCSCAGSCKCKNCRCRSC) are beta. A divalent metal cation is bound by residues Cys6, Cys8, Cys14, Cys16, Cys20, Cys22, Cys25, Cys27, Cys30, Cys34, Cys35, Cys37, Cys38, Cys42, Cys45, Cys49, Cys51, Cys59, Cys61, and Cys62. The alpha stretch occupies residues 31 to 63 (RKSCCSCCPAGCNNCAKGCVCKEPASSKCSCCH).

This sequence belongs to the metallothionein superfamily. Type 1 family.

In terms of biological role, metallothioneins have a high content of cysteine residues that bind various heavy metals. The sequence is that of Metallothionein from Anas platyrhynchos (Mallard).